The sequence spans 288 residues: Peroxisomal membrane protein pex13 (288 aa).

The tract at residues 1 to 32 is disordered; it reads METNQNEKGPSLPSYPAGGIMSVSNSNADTNQ. The span at 22-32 shows a compositional bias: polar residues; sequence SVSNSNADTNQ. The chain crosses the membrane as a helical span at residues 178 to 198; that stretch reads IYSIVSSLAIILGLVGLPYAI. Residues 222-288 form the SH3 domain; sequence DSLEFCKADY…PSNYCSIISR (67 aa).

This sequence belongs to the peroxin-13 family. Interacts (via SH3 domain) with PEX14 (via SH3-binding motif); forming the PEX13-PEX14 docking complex.

It is found in the peroxisome membrane. Functionally, component of the PEX13-PEX14 docking complex, a translocon channel that specifically mediates the import of peroxisomal cargo proteins bound to PEX5 receptor. The PEX13-PEX14 docking complex forms a large import pore which can be opened to a diameter of about 9 nm. Mechanistically, PEX5 receptor along with cargo proteins associates with the PEX14 subunit of the PEX13-PEX14 docking complex in the cytosol, leading to the insertion of the receptor into the organelle membrane with the concomitant translocation of the cargo into the peroxisome matrix. This Schizosaccharomyces pombe (strain 972 / ATCC 24843) (Fission yeast) protein is Peroxisomal membrane protein pex13 (pex13).